The chain runs to 291 residues: Protein US2 (291 aa).

At G2 the chain carries N-acetylglycine; by host; partial. The interval 251–270 (PEVPDEQPTSPGRGPQETDP) is disordered.

It belongs to the herpesviridae HHV-1 US2 protein family. In terms of assembly, interacts with host KRT18.

The protein resides in the host cytoplasm. The protein localises to the host nucleus. The chain is Protein US2 from Homo sapiens (Human).